We begin with the raw amino-acid sequence, 294 residues long: Shikimate dehydrogenase (NADP(+)) (294 aa).

Shikimate is bound by residues 14–16 (SKS) and threonine 61. Catalysis depends on lysine 65, which acts as the Proton acceptor. Aspartate 77 is a binding site for NADP(+). 2 residues coordinate shikimate: asparagine 86 and aspartate 102. NADP(+) contacts are provided by residues 140 to 144 (GSGGA) and leucine 235. Residue tyrosine 237 participates in shikimate binding. Residue glycine 259 participates in NADP(+) binding.

It belongs to the shikimate dehydrogenase family. As to quaternary structure, homodimer.

The catalysed reaction is shikimate + NADP(+) = 3-dehydroshikimate + NADPH + H(+). It functions in the pathway metabolic intermediate biosynthesis; chorismate biosynthesis; chorismate from D-erythrose 4-phosphate and phosphoenolpyruvate: step 4/7. Functionally, involved in the biosynthesis of the chorismate, which leads to the biosynthesis of aromatic amino acids. Catalyzes the reversible NADPH linked reduction of 3-dehydroshikimate (DHSA) to yield shikimate (SA). This Blochmanniella floridana protein is Shikimate dehydrogenase (NADP(+)).